A 424-amino-acid polypeptide reads, in one-letter code: Glutamyl-tRNA(Gln) amidotransferase subunit D (424 aa).

The interval 56–78 (GETANGSRNGGKGCKTNEEELPE) is disordered. Positions 84–413 (PKIAILSTGG…EKAAGMLRED (330 aa)) constitute an Asparaginase/glutaminase domain. Catalysis depends on residues threonine 94, threonine 170, aspartate 171, and lysine 247.

Belongs to the asparaginase 1 family. GatD subfamily. As to quaternary structure, heterodimer of GatD and GatE.

It catalyses the reaction L-glutamyl-tRNA(Gln) + L-glutamine + ATP + H2O = L-glutaminyl-tRNA(Gln) + L-glutamate + ADP + phosphate + H(+). Allows the formation of correctly charged Gln-tRNA(Gln) through the transamidation of misacylated Glu-tRNA(Gln) in organisms which lack glutaminyl-tRNA synthetase. The reaction takes place in the presence of glutamine and ATP through an activated gamma-phospho-Glu-tRNA(Gln). The GatDE system is specific for glutamate and does not act on aspartate. This is Glutamyl-tRNA(Gln) amidotransferase subunit D from Methanosarcina acetivorans (strain ATCC 35395 / DSM 2834 / JCM 12185 / C2A).